Consider the following 89-residue polypeptide: Small ribosomal subunit protein uS14A (89 aa).

The protein belongs to the universal ribosomal protein uS14 family. In terms of assembly, part of the 30S ribosomal subunit. Contacts proteins S3 and S10.

Its function is as follows. Binds 16S rRNA, required for the assembly of 30S particles and may also be responsible for determining the conformation of the 16S rRNA at the A site. The protein is Small ribosomal subunit protein uS14A of Listeria monocytogenes serovar 1/2a (strain ATCC BAA-679 / EGD-e).